A 1404-amino-acid polypeptide reads, in one-letter code: DNA-directed RNA polymerase subunit beta' (1404 aa).

Positions 70, 72, 85, and 88 each coordinate Zn(2+). Residues aspartate 458, aspartate 460, and aspartate 462 each coordinate Mg(2+). Zn(2+) contacts are provided by cysteine 813, cysteine 887, cysteine 894, and cysteine 897. Residues 1377-1404 form a disordered region; the sequence is ERRAIAESEAAELEASQAETSDENAAAE.

This sequence belongs to the RNA polymerase beta' chain family. The RNAP catalytic core consists of 2 alpha, 1 beta, 1 beta' and 1 omega subunit. When a sigma factor is associated with the core the holoenzyme is formed, which can initiate transcription. Mg(2+) is required as a cofactor. It depends on Zn(2+) as a cofactor.

The enzyme catalyses RNA(n) + a ribonucleoside 5'-triphosphate = RNA(n+1) + diphosphate. Its function is as follows. DNA-dependent RNA polymerase catalyzes the transcription of DNA into RNA using the four ribonucleoside triphosphates as substrates. This chain is DNA-directed RNA polymerase subunit beta', found in Polaromonas naphthalenivorans (strain CJ2).